The following is a 281-amino-acid chain: Shikimate dehydrogenase (NADP(+)) (281 aa).

Shikimate is bound by residues 19–21 (SFS) and threonine 66. The Proton acceptor role is filled by lysine 70. Shikimate is bound by residues asparagine 91 and aspartate 104. NADP(+) contacts are provided by residues 127–131 (GAGGA) and isoleucine 223. Tyrosine 225 provides a ligand contact to shikimate. NADP(+) is bound at residue glycine 246.

Belongs to the shikimate dehydrogenase family. In terms of assembly, homodimer.

The catalysed reaction is shikimate + NADP(+) = 3-dehydroshikimate + NADPH + H(+). Its pathway is metabolic intermediate biosynthesis; chorismate biosynthesis; chorismate from D-erythrose 4-phosphate and phosphoenolpyruvate: step 4/7. Functionally, involved in the biosynthesis of the chorismate, which leads to the biosynthesis of aromatic amino acids. Catalyzes the reversible NADPH linked reduction of 3-dehydroshikimate (DHSA) to yield shikimate (SA). The protein is Shikimate dehydrogenase (NADP(+)) of Methanobrevibacter smithii (strain ATCC 35061 / DSM 861 / OCM 144 / PS).